A 575-amino-acid polypeptide reads, in one-letter code: MELENFMANTLLLKARQGFTKKTGRSKKWRELLKLPPVSMCSDLRHSIEKDFSSLCDQQPIGRLLFRQFCNTKPDLKRCIEFLDAAAEYEVTIEEEQREFGLSIYSRFFKENSEVSLPQIPPDLVKECKCNLKQSSPSQNVFQDCAGVIYKYLSEKPFEEYQESTYYNRFLQWKWLERRPVTKNTFRQYRVLGKGGFGEVCACQVRATGKMYACKKLEKKRIKKRKGEAMALNEKRILEKLHSRFVVSLAYTYETKDALCLVLTIMNGGDLKYHIYNLGNPGFEEQRAVFYAAELCCGLEDLQRERIVYRDLKPENILLDDHGHIRISDLGLALEIPEGEMVRGRVGTVGYMAPEIISHEKYTFSPDWWGLGCLIYEMIAGHSPFRKYKEKVNREEMERRVKTETEEYSERFSENAKSICSMLLTKDPSKRLGCQSDGASAVKQHPIFKDINFSRLEANMLDPPFCPDPEAIYCKDILDIGQFSVVKGVNLDTNDEIFYTQFATGCVTIPWQNEMIESGCFKDLNEYEDKGLSPLEKHKICSCILRPKRNFFHRLFRRAACLNIAHSEEREPTEH.

N-acetylmethionine is present on methionine 1. An N-terminal region spans residues 1–153; it reads MELENFMANT…DCAGVIYKYL (153 aa). Positions 51–171 constitute an RGS domain; that stretch reads DFSSLCDQQP…QESTYYNRFL (121 aa). Residues 186–448 enclose the Protein kinase domain; that stretch reads FRQYRVLGKG…ASAVKQHPIF (263 aa). ATP contacts are provided by residues 192 to 200 and lysine 215; that span reads LGKGGFGEV. The active-site Proton acceptor is aspartate 311. Positions 449–514 constitute an AGC-kinase C-terminal domain; sequence KDINFSRLEA…GCVTIPWQNE (66 aa). Serine 484 bears the Phosphoserine mark.

Belongs to the protein kinase superfamily. AGC Ser/Thr protein kinase family. GPRK subfamily. As to quaternary structure, interacts with DRD3. Post-translationally, palmitoylated. In terms of tissue distribution, isoform GRK4A is expressed in testis. Isoform GRK4B is heterogeneously distributed in the kidney, with 20-fold enrichment in the outer medulla. Has a widespread but low level of expression in tissues other than testis.

It is found in the cytoplasm. The protein resides in the cell cortex. It carries out the reaction [G-protein-coupled receptor] + ATP = [G-protein-coupled receptor]-phosphate + ADP + H(+). With respect to regulation, inhibited by heparin. Specifically phosphorylates the activated forms of G protein-coupled receptors. Plays an important role in the regulation of renal sodium handling and blood pressure. The protein is G protein-coupled receptor kinase 4 (Grk4) of Rattus norvegicus (Rat).